The chain runs to 95 residues: Large ribosomal subunit protein bL25 (95 aa).

It belongs to the bacterial ribosomal protein bL25 family. In terms of assembly, part of the 50S ribosomal subunit; part of the 5S rRNA/L5/L18/L25 subcomplex. Contacts the 5S rRNA. Binds to the 5S rRNA independently of L5 and L18.

Its function is as follows. This is one of the proteins that binds to the 5S RNA in the ribosome where it forms part of the central protuberance. This Shewanella piezotolerans (strain WP3 / JCM 13877) protein is Large ribosomal subunit protein bL25.